The sequence spans 314 residues: 4-hydroxy-3-methylbut-2-enyl diphosphate reductase (314 aa).

Residue Cys12 coordinates [4Fe-4S] cluster. (2E)-4-hydroxy-3-methylbut-2-enyl diphosphate is bound by residues His41 and His74. Positions 41 and 74 each coordinate dimethylallyl diphosphate. His41 and His74 together coordinate isopentenyl diphosphate. Cys96 provides a ligand contact to [4Fe-4S] cluster. Residue His124 coordinates (2E)-4-hydroxy-3-methylbut-2-enyl diphosphate. Dimethylallyl diphosphate is bound at residue His124. His124 is an isopentenyl diphosphate binding site. Glu126 acts as the Proton donor in catalysis. (2E)-4-hydroxy-3-methylbut-2-enyl diphosphate is bound at residue Thr168. A [4Fe-4S] cluster-binding site is contributed by Cys198. The (2E)-4-hydroxy-3-methylbut-2-enyl diphosphate site is built by Ser226, Ser227, Asn228, and Ser270. Dimethylallyl diphosphate-binding residues include Ser226, Ser227, Asn228, and Ser270. Residues Ser226, Ser227, Asn228, and Ser270 each coordinate isopentenyl diphosphate.

Belongs to the IspH family. [4Fe-4S] cluster is required as a cofactor.

It catalyses the reaction isopentenyl diphosphate + 2 oxidized [2Fe-2S]-[ferredoxin] + H2O = (2E)-4-hydroxy-3-methylbut-2-enyl diphosphate + 2 reduced [2Fe-2S]-[ferredoxin] + 2 H(+). The catalysed reaction is dimethylallyl diphosphate + 2 oxidized [2Fe-2S]-[ferredoxin] + H2O = (2E)-4-hydroxy-3-methylbut-2-enyl diphosphate + 2 reduced [2Fe-2S]-[ferredoxin] + 2 H(+). The protein operates within isoprenoid biosynthesis; dimethylallyl diphosphate biosynthesis; dimethylallyl diphosphate from (2E)-4-hydroxy-3-methylbutenyl diphosphate: step 1/1. It functions in the pathway isoprenoid biosynthesis; isopentenyl diphosphate biosynthesis via DXP pathway; isopentenyl diphosphate from 1-deoxy-D-xylulose 5-phosphate: step 6/6. Its function is as follows. Catalyzes the conversion of 1-hydroxy-2-methyl-2-(E)-butenyl 4-diphosphate (HMBPP) into a mixture of isopentenyl diphosphate (IPP) and dimethylallyl diphosphate (DMAPP). Acts in the terminal step of the DOXP/MEP pathway for isoprenoid precursor biosynthesis. The polypeptide is 4-hydroxy-3-methylbut-2-enyl diphosphate reductase (Pseudomonas aeruginosa (strain ATCC 15692 / DSM 22644 / CIP 104116 / JCM 14847 / LMG 12228 / 1C / PRS 101 / PAO1)).